Reading from the N-terminus, the 42-residue chain is Photosystem I reaction center subunit IX (42 aa).

The chain crosses the membrane as a helical span at residues 7 to 27; it reads YLSTAPVLATIWFIILAGLLI.

This sequence belongs to the PsaJ family.

It localises to the plastid. The protein localises to the chloroplast thylakoid membrane. Its function is as follows. May help in the organization of the PsaE and PsaF subunits. The sequence is that of Photosystem I reaction center subunit IX from Mesostigma viride (Green alga).